A 372-amino-acid polypeptide reads, in one-letter code: MAKIVVGLSGGVDSAVSAYLLKKAGHNVIAVFMRNWDSSLNNDFLGKKNEKNFTICPQEQDWLDAKVVAKQLNIPIFRIDFIKEYWDEVFSDLILKYQSGLTPNPDILCNKNIKFKHFLDYAQKVHNADFIAMGHYAKTDNGNLYAGADSLKDQSYFLGQLSKSQLQKTIFPLGNLHKSEVRKIANELGLINAKKKDSTGICFIGERKFTDFLQNYIPAQPGNIIDISTKKVLGKHIGIMYFTIGQRKGFGLSGMKEPYFVVGHNLKEKILYVSPQSEKKWLESDSLMAKNANFLSENFRNLDNLSAKFRYRQEAIPIKIEKIQDNSFWISYQKYQAITPGQQVVIYHQNQVILAGEIALLFRNGKKLDYLD.

ATP is bound by residues 7-14 (GLSGGVDS) and Met33. The interval 104–106 (NPD) is interaction with target base in tRNA. Residue Cys109 is the Nucleophile of the active site. A disulfide bridge connects residues Cys109 and Cys202. Gly134 provides a ligand contact to ATP. Residues 152–154 (KDQ) are interaction with tRNA. The Cysteine persulfide intermediate role is filled by Cys202. The segment at 310–311 (RY) is interaction with tRNA.

The protein belongs to the MnmA/TRMU family.

It localises to the cytoplasm. The catalysed reaction is S-sulfanyl-L-cysteinyl-[protein] + uridine(34) in tRNA + AH2 + ATP = 2-thiouridine(34) in tRNA + L-cysteinyl-[protein] + A + AMP + diphosphate + H(+). Its function is as follows. Catalyzes the 2-thiolation of uridine at the wobble position (U34) of tRNA, leading to the formation of s(2)U34. This chain is tRNA-specific 2-thiouridylase MnmA, found in Mesomycoplasma hyopneumoniae (strain 232) (Mycoplasma hyopneumoniae).